Consider the following 330-residue polypeptide: UPF0324 membrane protein PG_2004 (330 aa).

9 helical membrane-spanning segments follow: residues 13–31 (IAYP…GSLV), 36–58 (PFTS…LIFG), 71–93 (VLLQ…LASG), 97–114 (MMFT…GWFI), 126–148 (SALI…GPIL), 158–180 (ALGT…GHWL), 248–270 (VPLF…EAYF), 285–307 (LTLS…VGVR), and 312–329 (GLFL…FILL).

It belongs to the UPF0324 family.

It is found in the cell membrane. The chain is UPF0324 membrane protein PG_2004 from Porphyromonas gingivalis (strain ATCC BAA-308 / W83).